The following is a 589-amino-acid chain: Peroxisomal biogenesis factor 8 (589 aa).

The Microbody targeting signal motif lies at 587–589; sequence SKL.

The protein localises to the peroxisome matrix. In terms of biological role, required for peroxisome assembly. The chain is Peroxisomal biogenesis factor 8 (PEX8) from Saccharomyces cerevisiae (strain ATCC 204508 / S288c) (Baker's yeast).